Here is a 746-residue protein sequence, read N- to C-terminus: MLVLGLLVAGAADGCELVPRHLRGRRATGSAATAASSPAAAAGDSPALMTDPCMSLSPPCFTEEDRFSLEALQTIHKQMDDDKDGGIEVEESDEFIREDMKYKDATNKHSHLHREDKHITIEDLWKRWKTSEVHNWTLEDTLQWLIEFVELPQYEKNFRDNNVKGTTLPRIAVHEPSFMISQLKISDRSHRQKLQLKALDVVLFGPLTRPPHNWMKDFILTVSIVIGVGGCWFAYTQNKTSKEHVAKMMKDLESLQTAEQSLMDLQERLEKAQEENRNVAVEKQNLERKMMDEINYAKEEACRLRELREGAECELSRRQYAEQELEQVRMALKKAEKEFELRSSWSVPDALQKWLQLTHEVEVQYYNIKRQNAEMQLAIAKDEAEKIKKKRSTVFGTLHVAHSSSLDEVDHKILEAKKALSELTTCLRERLFRWQQIEKICGFQIAHNSGLPSLTSSLYSDHSWVVMPRVSIPPYPIAGGVDDLDEDTPPIVSQFPGTMAKPPGSLARSSSLCRSRRSIVPSSPQPQRAQLAPHAPHPSHPRHPHHPQHTPHSLPSPDPDILSVSSCPALYRNEEEEEAIYFSAEKQWEVPDTASECDSLNSSIGRKQSPPLSLEIYQTLSPRKISRDEVSLEDSSRGDSPVTVDVSWGSPDCVGLTETKSMIFSPASKVYNGILEKSCSMNQLSSGIPVPKPRHTSCSSAGNDSKPVQEAPSVARISSIPHDLCHNGEKSKKPSKIKSLFKKKSK.

An N-terminal signal peptide occupies residues 1 to 14 (MLVLGLLVAGAADG). At 15-218 (CELVPRHLRG…RPPHNWMKDF (204 aa)) the chain is on the extracellular side. The region spanning 67-102 (FSLEALQTIHKQMDDDKDGGIEVEESDEFIREDMKY) is the EF-hand domain. Ca(2+)-binding residues include D80, D82, D84, and E91. N135 carries N-linked (GlcNAc...) asparagine glycosylation. One can recognise an SAM domain in the interval 136-204 (WTLEDTLQWL…QLKALDVVLF (69 aa)). The chain crosses the membrane as a helical span at residues 219 to 235 (ILTVSIVIGVGGCWFAY). Over 236–746 (TQNKTSKEHV…IKSLFKKKSK (511 aa)) the chain is Cytoplasmic. The stretch at 247-394 (KMMKDLESLQ…EKIKKKRSTV (148 aa)) forms a coiled coil. Residues 483–562 (DLDEDTPPIV…SLPSPDPDIL (80 aa)) are disordered. Phosphoserine is present on S523. The span at 537–549 (HPSHPRHPHHPQH) shows a compositional bias: basic residues. Phosphoserine is present on residues S609, S621, S640, S650, S661, S665, S680, and S697. A disordered region spans residues 685–746 (SSGIPVPKPR…IKSLFKKKSK (62 aa)). Basic and acidic residues predominate over residues 723–732 (DLCHNGEKSK). Basic residues predominate over residues 733–746 (KPSKIKSLFKKKSK).

In terms of assembly, oligomer with STIM1. Interacts with ORAI1. Post-translationally, glycosylated. In terms of processing, phosphorylated predominantly on Ser residues. Expressed in all tissues and tumor cell lines examined.

It is found in the endoplasmic reticulum membrane. Functionally, plays a role in mediating store-operated Ca(2+) entry (SOCE), a Ca(2+) influx following depletion of intracellular Ca(2+) stores. Functions as a highly sensitive Ca(2+) sensor in the endoplasmic reticulum which activates both store-operated and store-independent Ca(2+)-influx. Regulates basal cytosolic and endoplasmic reticulum Ca(2+) concentrations. Upon mild variations of the endoplasmic reticulum Ca(2+) concentration, translocates from the endoplasmic reticulum to the plasma membrane where it probably activates the Ca(2+) release-activated Ca(2+) (CRAC) channels ORAI1, ORAI2 and ORAI3. May inhibit STIM1-mediated Ca(2+) influx. The polypeptide is Stromal interaction molecule 2 (STIM2) (Homo sapiens (Human)).